The chain runs to 579 residues: Polyadenylate-binding protein, cytoplasmic and nuclear (579 aa).

A compositionally biased stretch (basic and acidic residues) spans 1 to 10 (MADITEKTAE). A disordered region spans residues 1-32 (MADITEKTAEQLENLSLQDKQEGTNEENQSET). 4 consecutive RRM domains span residues 35-113 (ASLY…WSQR), 123-200 (GNIF…PHLS), 216-293 (TNVY…RAQK), and 319-396 (INLF…IAQR). Residues 487–566 (GFARNGPAAN…ASAAYESFKQ (80 aa)) enclose the PABC domain. Positions 560 to 579 (AYESFKQEQQQPQGEEAQQA) are disordered. The span at 566 to 579 (QEQQQPQGEEAQQA) shows a compositional bias: low complexity.

Belongs to the polyadenylate-binding protein type-1 family.

The protein localises to the cytoplasm. Its subcellular location is the nucleus. Its function is as follows. Binds the poly(A) tail of mRNA. Appears to be an important mediator of the multiple roles of the poly(A) tail in mRNA biogenesis, stability and translation. In the nucleus, involved in both mRNA cleavage and polyadenylation. Is also required for efficient mRNA export to the cytoplasm. Acts in concert with a poly(A)-specific nuclease (PAN) to affect poly(A) tail shortening, which may occur concomitantly with either nucleocytoplasmic mRNA transport or translational initiation. In the cytoplasm, stimulates translation initiation and regulates mRNA decay through translation termination-coupled poly(A) shortening, probably mediated by PAN. This Candida glabrata (strain ATCC 2001 / BCRC 20586 / JCM 3761 / NBRC 0622 / NRRL Y-65 / CBS 138) (Yeast) protein is Polyadenylate-binding protein, cytoplasmic and nuclear (PAB1).